The primary structure comprises 369 residues: UDP-N-acetylglucosamine--N-acetylmuramyl-(pentapeptide) pyrophosphoryl-undecaprenol N-acetylglucosamine transferase (369 aa).

Residues 16-18, Asn130, Arg171, Ser203, Ile253, and Gln298 each bind UDP-N-acetyl-alpha-D-glucosamine; that span reads TGG.

The protein belongs to the glycosyltransferase 28 family. MurG subfamily.

It is found in the cell inner membrane. The enzyme catalyses di-trans,octa-cis-undecaprenyl diphospho-N-acetyl-alpha-D-muramoyl-L-alanyl-D-glutamyl-meso-2,6-diaminopimeloyl-D-alanyl-D-alanine + UDP-N-acetyl-alpha-D-glucosamine = di-trans,octa-cis-undecaprenyl diphospho-[N-acetyl-alpha-D-glucosaminyl-(1-&gt;4)]-N-acetyl-alpha-D-muramoyl-L-alanyl-D-glutamyl-meso-2,6-diaminopimeloyl-D-alanyl-D-alanine + UDP + H(+). It participates in cell wall biogenesis; peptidoglycan biosynthesis. Functionally, cell wall formation. Catalyzes the transfer of a GlcNAc subunit on undecaprenyl-pyrophosphoryl-MurNAc-pentapeptide (lipid intermediate I) to form undecaprenyl-pyrophosphoryl-MurNAc-(pentapeptide)GlcNAc (lipid intermediate II). The protein is UDP-N-acetylglucosamine--N-acetylmuramyl-(pentapeptide) pyrophosphoryl-undecaprenol N-acetylglucosamine transferase of Cytophaga hutchinsonii (strain ATCC 33406 / DSM 1761 / CIP 103989 / NBRC 15051 / NCIMB 9469 / D465).